A 499-amino-acid polypeptide reads, in one-letter code: Long chain base biosynthesis protein 2b (499 aa).

A helical membrane pass occupies residues V5–H25. K322 is modified (N6-(pyridoxal phosphate)lysine).

The protein belongs to the class-II pyridoxal-phosphate-dependent aminotransferase family. In terms of assembly, heterodimer with LCB1. Component of the serine palmitoyltransferase (SPT) complex, composed of LCB1 and LCB2. It depends on pyridoxal 5'-phosphate as a cofactor.

Its subcellular location is the endoplasmic reticulum membrane. The enzyme catalyses L-serine + hexadecanoyl-CoA + H(+) = 3-oxosphinganine + CO2 + CoA. It participates in lipid metabolism; sphingolipid metabolism. Its function is as follows. Serine palmitoyltransferase (SPT). The heterodimer formed with LCB1 constitutes the catalytic core. The sequence is that of Long chain base biosynthesis protein 2b from Oryza sativa subsp. japonica (Rice).